A 123-amino-acid polypeptide reads, in one-letter code: Large ribosomal subunit protein uL14c (123 aa).

It belongs to the universal ribosomal protein uL14 family. In terms of assembly, part of the 50S ribosomal subunit.

The protein localises to the plastid. It localises to the chloroplast. Functionally, binds to 23S rRNA. This Sorghum bicolor (Sorghum) protein is Large ribosomal subunit protein uL14c.